The primary structure comprises 557 residues: Dihydroxy-acid dehydratase (557 aa).

Aspartate 78 is a Mg(2+) binding site. A [2Fe-2S] cluster-binding site is contributed by cysteine 119. Residues aspartate 120 and lysine 121 each contribute to the Mg(2+) site. Position 121 is an N6-carboxylysine (lysine 121). Cysteine 192 is a [2Fe-2S] cluster binding site. A Mg(2+)-binding site is contributed by glutamate 442. Residue serine 468 is the Proton acceptor of the active site.

It belongs to the IlvD/Edd family. Homodimer. [2Fe-2S] cluster is required as a cofactor. Requires Mg(2+) as cofactor.

It carries out the reaction (2R)-2,3-dihydroxy-3-methylbutanoate = 3-methyl-2-oxobutanoate + H2O. The catalysed reaction is (2R,3R)-2,3-dihydroxy-3-methylpentanoate = (S)-3-methyl-2-oxopentanoate + H2O. It functions in the pathway amino-acid biosynthesis; L-isoleucine biosynthesis; L-isoleucine from 2-oxobutanoate: step 3/4. The protein operates within amino-acid biosynthesis; L-valine biosynthesis; L-valine from pyruvate: step 3/4. In terms of biological role, functions in the biosynthesis of branched-chain amino acids. Catalyzes the dehydration of (2R,3R)-2,3-dihydroxy-3-methylpentanoate (2,3-dihydroxy-3-methylvalerate) into 2-oxo-3-methylpentanoate (2-oxo-3-methylvalerate) and of (2R)-2,3-dihydroxy-3-methylbutanoate (2,3-dihydroxyisovalerate) into 2-oxo-3-methylbutanoate (2-oxoisovalerate), the penultimate precursor to L-isoleucine and L-valine, respectively. The polypeptide is Dihydroxy-acid dehydratase (Bacillus cytotoxicus (strain DSM 22905 / CIP 110041 / 391-98 / NVH 391-98)).